The chain runs to 238 residues: 7-cyano-7-deazaguanine synthase (238 aa).

10–20 is a binding site for ATP; that stretch reads LSGGLDSSTVL. Zn(2+) contacts are provided by C190, C198, C201, and C204.

It belongs to the QueC family. Zn(2+) serves as cofactor.

The enzyme catalyses 7-carboxy-7-deazaguanine + NH4(+) + ATP = 7-cyano-7-deazaguanine + ADP + phosphate + H2O + H(+). It participates in purine metabolism; 7-cyano-7-deazaguanine biosynthesis. Catalyzes the ATP-dependent conversion of 7-carboxy-7-deazaguanine (CDG) to 7-cyano-7-deazaguanine (preQ(0)). This is 7-cyano-7-deazaguanine synthase from Thermoplasma acidophilum (strain ATCC 25905 / DSM 1728 / JCM 9062 / NBRC 15155 / AMRC-C165).